We begin with the raw amino-acid sequence, 577 residues long: MLSCNICGETVNSEPDMKAHLIVHMENEIICPFCKLSGINYNEICFHIETVHFEQNAPEKNSEKLAAVQYGHSDRKNTNLQSTAEVTSGIHSACASSFPKESSESLPKDRTVKHEAFYTENITESRKYQKSREKKPGLSEAQGSIYETTYSPPECPFCGKIEGCSQDMEIHVKTKHASLLESPLKDCHQPLYDCPMCGLVCTNYHILQEHVDLHLEESSFQQGMDRVQCSSDRELAHRLQQEEDRKRKSEESRQEREEFQKLQRQYGLDNSGGYKQQQLRHMELEVNRGRMHPSEFHSRKADMLESIAIGIDDGKTKTSGIIEALHRYYQNTATDVRCVWLSTVVDHFHSSFGDKGWGCGYRNFQMLLSSLLQSDVYGDCLKGMAVPCIPKIQSMIEDAWNEGFDPQGASQLNNKLQGTKAWIGACEIYTLLTSLRVKCRIIDFHKSTGPLGTHPRLFEWILNYYSSETEGTPKIVCTSKPPIYLQHQGHSRTVVGIEEKKNRTLCLLVFDPGCPSREMQKLLKQDMEASSLRQLRKSVGNLKHKQYQIVAVEGVLSPEEKVARKQASQVFTAEKIP.

A C2H2-type 1 zinc finger spans residues 2-24 (LSCNICGETVNSEPDMKAHLIVH). Residues 29 to 52 (IICPFCKLSGINYNEICFHIETVH) form a C2H2-type 2; atypical zinc finger. Residues 124–137 (ESRKYQKSREKKPG) show a composition bias toward basic and acidic residues. Residues 124–145 (ESRKYQKSREKKPGLSEAQGSI) are disordered. Residues 153–176 (PECPFCGKIEGCSQDMEIHVKTKH) form a C2H2-type 3; atypical zinc finger. The segment at 192–214 (YDCPMCGLVCTNYHILQEHVDLH) adopts a C2H2-type 4 zinc-finger fold. The interval 225-247 (DRVQCSSDRELAHRLQQEEDRKR) is MIU. The segment at 238 to 260 (RLQQEEDRKRKSEESRQEREEFQ) is disordered. The interval 248-273 (KSEESRQEREEFQKLQRQYGLDNSGG) is zUBD/ZHA. Position 261 is an N6-acetyllysine (Lys-261). Cys-359 acts as the Nucleophile in catalysis. His-490 serves as the catalytic Proton acceptor. Residue Asp-511 is part of the active site.

It belongs to the peptidase C78 family. ZUFSP subfamily. In terms of assembly, interacts with RPA1 and RPA2.

It is found in the cytoplasm. Its subcellular location is the nucleus. The catalysed reaction is Thiol-dependent hydrolysis of ester, thioester, amide, peptide and isopeptide bonds formed by the C-terminal Gly of ubiquitin (a 76-residue protein attached to proteins as an intracellular targeting signal).. In terms of biological role, deubiquitinase with endodeubiquitinase activity that specifically interacts with and cleaves 'Lys-63'-linked long polyubiquitin chains. Shows only weak activity against 'Lys-11' and 'Lys-48'-linked chains. Plays an important role in genome stability pathways, functioning to prevent spontaneous DNA damage and also promote cellular survival in response to exogenous DNA damage. Modulates the ubiquitination status of replication protein A (RPA) complex proteins in response to replication stress. This Mus musculus (Mouse) protein is Zinc finger-containing ubiquitin peptidase 1.